A 120-amino-acid chain; its full sequence is Large ribosomal subunit protein uL18 (120 aa).

It belongs to the universal ribosomal protein uL18 family. In terms of assembly, part of the 50S ribosomal subunit; part of the 5S rRNA/L5/L18/L25 subcomplex. Contacts the 5S and 23S rRNAs.

In terms of biological role, this is one of the proteins that bind and probably mediate the attachment of the 5S RNA into the large ribosomal subunit, where it forms part of the central protuberance. The sequence is that of Large ribosomal subunit protein uL18 from Bartonella tribocorum (strain CIP 105476 / IBS 506).